A 463-amino-acid chain; its full sequence is MNTNQIILTNQNDNSVNVWSNVTQDLYNYYGEALYNSWFSKVNFIESSLNTVILCAPTNFIRDWIKSKYSVVILQLFQHYNNAIKTVEIITKELPASNQATLELPTKTFADIGSSELNSENIFSTFDIRFTFDNFVVGAPNELAYAAARAVAESSSAVSESNPLFLYGGVGLGKTHLMHAIGWYIKQNNPSRKVIYMSAEKFMYQFVKALRNKEVMSFKEKFRSVDVLMIDDIQFICGKDSTQEEFFHTFNTLIDNNRQMVISCDRSPSDLDDIEDRIKSRLGWGLVADVHSTTYELRLGILESKIEQMNVKVPKDAIDFLASKIVSNVRELEGALNKVIAHSNFTAKEITLENTQNILRDLLRSNERIITVEDIQKKVANRYNIKLSDMSSPRRMRTIARPRQIAMYLSKILTPKSLVDIGKKFGKKDHTTVMHAIKKVEELLESDLELREEINLMMKILQN.

The tract at residues 1–84 (MNTNQIILTN…QLFQHYNNAI (84 aa)) is domain I, interacts with DnaA modulators. The segment at 84 to 124 (IKTVEIITKELPASNQATLELPTKTFADIGSSELNSENIFS) is domain II. Residues 125–343 (TFDIRFTFDN…GALNKVIAHS (219 aa)) form a domain III, AAA+ region region. Positions 171, 173, 174, and 175 each coordinate ATP. The domain IV, binds dsDNA stretch occupies residues 344-463 (NFTAKEITLE…INLMMKILQN (120 aa)).

This sequence belongs to the DnaA family. Oligomerizes as a right-handed, spiral filament on DNA at oriC.

It is found in the cytoplasm. Functionally, plays an essential role in the initiation and regulation of chromosomal replication. ATP-DnaA binds to the origin of replication (oriC) to initiate formation of the DNA replication initiation complex once per cell cycle. Binds the DnaA box (a 9 base pair repeat at the origin) and separates the double-stranded (ds)DNA. Forms a right-handed helical filament on oriC DNA; dsDNA binds to the exterior of the filament while single-stranded (ss)DNA is stabiized in the filament's interior. The ATP-DnaA-oriC complex binds and stabilizes one strand of the AT-rich DNA unwinding element (DUE), permitting loading of DNA polymerase. After initiation quickly degrades to an ADP-DnaA complex that is not apt for DNA replication. Binds acidic phospholipids. The protein is Chromosomal replication initiator protein DnaA of Rickettsia bellii (strain OSU 85-389).